Reading from the N-terminus, the 161-residue chain is Urocortin-3 (161 aa).

The signal sequence occupies residues 1–21 (MLMPVHFLLLLLLLLGGPRTG). Positions 22–118 (LPHKFYKAKP…QDTAKSPHRT (97 aa)) are excised as a propeptide. A disordered region spans residues 64-118 (SRDASSGEEEEGKEKKTFPISGARGGARGTRYRYVSQAQPRGKPRQDTAKSPHRT). Residue isoleucine 157 is modified to Isoleucine amide.

This sequence belongs to the sauvagine/corticotropin-releasing factor/urotensin I family. Binds with high affinity to CRF receptors 2-alpha and 2-beta.

It is found in the secreted. In terms of biological role, suppresses food intake, delays gastric emptying and decreases heat-induced edema. Might represent an endogenous ligand for maintaining homeostasis after stress. The sequence is that of Urocortin-3 (UCN3) from Homo sapiens (Human).